The following is a 498-amino-acid chain: ATP synthase subunit beta, chloroplastic (498 aa).

At T6 the chain carries Phosphothreonine. S13 is subject to Phosphoserine. ATP is bound at residue 172 to 179; sequence GGAGVGKT.

It belongs to the ATPase alpha/beta chains family. In terms of assembly, F-type ATPases have 2 components, CF(1) - the catalytic core - and CF(0) - the membrane proton channel. CF(1) has five subunits: alpha(3), beta(3), gamma(1), delta(1), epsilon(1). CF(0) has four main subunits: a(1), b(1), b'(1) and c(9-12).

The protein resides in the plastid. The protein localises to the chloroplast thylakoid membrane. It carries out the reaction ATP + H2O + 4 H(+)(in) = ADP + phosphate + 5 H(+)(out). Produces ATP from ADP in the presence of a proton gradient across the membrane. The catalytic sites are hosted primarily by the beta subunits. This chain is ATP synthase subunit beta, chloroplastic, found in Capsella bursa-pastoris (Shepherd's purse).